Here is a 401-residue protein sequence, read N- to C-terminus: Probable tRNA sulfurtransferase (401 aa).

The THUMP domain maps to 60-165; the sequence is EPIIDKLKNV…QEGTYITCHD (106 aa). Residues 183 to 184, 208 to 209, Arg-265, Gly-287, and Gln-296 each bind ATP; these read ML and HF.

The protein belongs to the ThiI family.

The protein localises to the cytoplasm. It catalyses the reaction [ThiI sulfur-carrier protein]-S-sulfanyl-L-cysteine + a uridine in tRNA + 2 reduced [2Fe-2S]-[ferredoxin] + ATP + H(+) = [ThiI sulfur-carrier protein]-L-cysteine + a 4-thiouridine in tRNA + 2 oxidized [2Fe-2S]-[ferredoxin] + AMP + diphosphate. The enzyme catalyses [ThiS sulfur-carrier protein]-C-terminal Gly-Gly-AMP + S-sulfanyl-L-cysteinyl-[cysteine desulfurase] + AH2 = [ThiS sulfur-carrier protein]-C-terminal-Gly-aminoethanethioate + L-cysteinyl-[cysteine desulfurase] + A + AMP + 2 H(+). The protein operates within cofactor biosynthesis; thiamine diphosphate biosynthesis. Catalyzes the ATP-dependent transfer of a sulfur to tRNA to produce 4-thiouridine in position 8 of tRNAs, which functions as a near-UV photosensor. Also catalyzes the transfer of sulfur to the sulfur carrier protein ThiS, forming ThiS-thiocarboxylate. This is a step in the synthesis of thiazole, in the thiamine biosynthesis pathway. The sulfur is donated as persulfide by IscS. The protein is Probable tRNA sulfurtransferase of Geobacillus sp. (strain WCH70).